The sequence spans 1524 residues: Protein dispatched homolog 1 (1524 aa).

An N-linked (GlcNAc...) asparagine glycan is attached at Asn59. The next 4 helical transmembrane spans lie at 190 to 210 (VVVL…GVLV), 500 to 520 (LLMD…VMCV), 525 to 545 (MFIT…SYFL), and 549 to 569 (VFHF…LVGI). Residues 486–658 (GIEFGIKHSL…VTWLPAVVVL (173 aa)) form the SSD domain. An N-linked (GlcNAc...) asparagine glycan is attached at Asn582. Transmembrane regions (helical) follow at residues 604 to 624 (AALS…ANYV), 638 to 658 (GTAI…VVVL), 719 to 739 (YLWL…VCIN), 988 to 1008 (MGLS…NIII), 1010 to 1030 (LYAI…LVLL), 1040 to 1060 (VTIS…GVAY), 1079 to 1099 (VGSA…MMMP), and 1107 to 1127 (QLGT…TFFF).

This sequence belongs to the dispatched family. In terms of assembly, interacts with SHH via the cholesterol anchor of the dually lipid-modified SHH (ShhNp).

The protein resides in the membrane. In terms of biological role, functions in hedgehog (Hh) signaling. Regulates the release and extracellular accumulation of cholesterol-modified hedgehog proteins and is hence required for effective production of the Hh signal. Synergizes with SCUBE2 to cause an increase in SHH secretion. This chain is Protein dispatched homolog 1 (DISP1), found in Homo sapiens (Human).